A 483-amino-acid polypeptide reads, in one-letter code: Glutamate--tRNA ligase (483 aa).

Residues 9-19 (PSPTGFLHIGN) carry the 'HIGH' region motif. Positions 253-257 (KLSKR) match the 'KMSKS' region motif. Residue Lys256 coordinates ATP.

It belongs to the class-I aminoacyl-tRNA synthetase family. Glutamate--tRNA ligase type 1 subfamily. In terms of assembly, monomer.

It is found in the cytoplasm. It carries out the reaction tRNA(Glu) + L-glutamate + ATP = L-glutamyl-tRNA(Glu) + AMP + diphosphate. In terms of biological role, catalyzes the attachment of glutamate to tRNA(Glu) in a two-step reaction: glutamate is first activated by ATP to form Glu-AMP and then transferred to the acceptor end of tRNA(Glu). The chain is Glutamate--tRNA ligase from Mycoplasma capricolum subsp. capricolum (strain California kid / ATCC 27343 / NCTC 10154).